A 398-amino-acid chain; its full sequence is 1-deoxy-D-xylulose 5-phosphate reductoisomerase (398 aa).

Thr13, Gly14, Ser15, Ile16, Arg40, and Asn127 together coordinate NADPH. Lys128 contacts 1-deoxy-D-xylulose 5-phosphate. Glu129 contacts NADPH. Asp153 is a Mn(2+) binding site. 1-deoxy-D-xylulose 5-phosphate contacts are provided by Ser154, Glu155, Ser188, and His211. Glu155 serves as a coordination point for Mn(2+). Gly217 is an NADPH binding site. 1-deoxy-D-xylulose 5-phosphate contacts are provided by Ser224, Asn229, Lys230, and Glu233. Glu233 serves as a coordination point for Mn(2+).

Belongs to the DXR family. The cofactor is Mg(2+). It depends on Mn(2+) as a cofactor.

The catalysed reaction is 2-C-methyl-D-erythritol 4-phosphate + NADP(+) = 1-deoxy-D-xylulose 5-phosphate + NADPH + H(+). It functions in the pathway isoprenoid biosynthesis; isopentenyl diphosphate biosynthesis via DXP pathway; isopentenyl diphosphate from 1-deoxy-D-xylulose 5-phosphate: step 1/6. Its function is as follows. Catalyzes the NADPH-dependent rearrangement and reduction of 1-deoxy-D-xylulose-5-phosphate (DXP) to 2-C-methyl-D-erythritol 4-phosphate (MEP). The protein is 1-deoxy-D-xylulose 5-phosphate reductoisomerase of Cellvibrio japonicus (strain Ueda107) (Pseudomonas fluorescens subsp. cellulosa).